Reading from the N-terminus, the 391-residue chain is DNA repair protein NreA (391 aa).

The C4-type zinc finger occupies 6 to 20 (CAECKGKLLCGRSKC). The PIP motif motif lies at 382–389 (QTSLASFF).

It belongs to the Nre family. As to quaternary structure, interacts with the DNA polymerase sliding clamp (PCNA) via the PIP (PCNA-interacting peptide) motif.

Its function is as follows. Involved in DNA damage repair. The sequence is that of DNA repair protein NreA from Archaeoglobus fulgidus (strain ATCC 49558 / DSM 4304 / JCM 9628 / NBRC 100126 / VC-16).